The chain runs to 209 residues: COP9 signalosome complex subunit 8 (209 aa).

In terms of domain architecture, PCI spans 8-179; sequence DNAFSFRKLL…GALDVSLNRF (172 aa). A Phosphoserine modification is found at Ser-175.

Belongs to the CSN8 family. In terms of assembly, component of the CSN complex, composed of COPS1/GPS1, COPS2, COPS3, COPS4, COPS5, COPS6, COPS7 (COPS7A or COPS7B), COPS8 and COPS9. In the complex, it probably interacts directly with COPS3, COPS4 and COPS7 (COPS7A or COPS7B).

The protein localises to the cytoplasm. The protein resides in the nucleus. In terms of biological role, component of the COP9 signalosome complex (CSN), a complex involved in various cellular and developmental processes. The CSN complex is an essential regulator of the ubiquitin (Ubl) conjugation pathway by mediating the deneddylation of the cullin subunits of SCF-type E3 ligase complexes, leading to decrease the Ubl ligase activity of SCF-type complexes such as SCF, CSA or DDB2. The complex is also involved in phosphorylation of p53/TP53, c-jun/JUN, IkappaBalpha/NFKBIA, ITPK1 and IRF8/ICSBP, possibly via its association with CK2 and PKD kinases. CSN-dependent phosphorylation of TP53 and JUN promotes and protects degradation by the Ubl system, respectively. The protein is COP9 signalosome complex subunit 8 (Cops8) of Rattus norvegicus (Rat).